The sequence spans 202 residues: Small ribosomal subunit protein uS4 (202 aa).

The segment at 23–42 is disordered; the sequence is RKAARRSYPPGQHGQARRKR. The S4 RNA-binding domain occupies 90–154; the sequence is MRLDNLVFRL…SRKLVTANLE (65 aa).

This sequence belongs to the universal ribosomal protein uS4 family. As to quaternary structure, part of the 30S ribosomal subunit. Contacts protein S5. The interaction surface between S4 and S5 is involved in control of translational fidelity.

In terms of biological role, one of the primary rRNA binding proteins, it binds directly to 16S rRNA where it nucleates assembly of the body of the 30S subunit. Functionally, with S5 and S12 plays an important role in translational accuracy. The chain is Small ribosomal subunit protein uS4 from Synechococcus elongatus (strain ATCC 33912 / PCC 7942 / FACHB-805) (Anacystis nidulans R2).